We begin with the raw amino-acid sequence, 472 residues long: Probable glycine dehydrogenase (decarboxylating) subunit 2 (472 aa).

Position 268 is an N6-(pyridoxal phosphate)lysine (Lys268).

The protein belongs to the GcvP family. C-terminal subunit subfamily. As to quaternary structure, the glycine cleavage system is composed of four proteins: P, T, L and H. In this organism, the P 'protein' is a heterodimer of two subunits. It depends on pyridoxal 5'-phosphate as a cofactor.

It catalyses the reaction N(6)-[(R)-lipoyl]-L-lysyl-[glycine-cleavage complex H protein] + glycine + H(+) = N(6)-[(R)-S(8)-aminomethyldihydrolipoyl]-L-lysyl-[glycine-cleavage complex H protein] + CO2. In terms of biological role, the glycine cleavage system catalyzes the degradation of glycine. The P protein binds the alpha-amino group of glycine through its pyridoxal phosphate cofactor; CO(2) is released and the remaining methylamine moiety is then transferred to the lipoamide cofactor of the H protein. The sequence is that of Probable glycine dehydrogenase (decarboxylating) subunit 2 from Thermoplasma acidophilum (strain ATCC 25905 / DSM 1728 / JCM 9062 / NBRC 15155 / AMRC-C165).